The following is a 297-amino-acid chain: Transcription factor bHLH129 (297 aa).

The disordered stretch occupies residues 1 to 145 (MYPPNSSKST…SSSHQEHNSL (145 aa)). Serine 35 is modified (phosphoserine). Residues 68–82 (SSIGFDSNASSSSSL) are compositionally biased toward low complexity. The segment covering 111–121 (PNGGYGGGGEQ) has biased composition (gly residues). Serine 138 is subject to Phosphoserine. One can recognise a bHLH domain in the interval 239 to 289 (FATHPRSIAERERRTRISGKLKKLQELVPNMDKQTSYADMLDLAVEHIKGL).

In terms of assembly, homodimer.

Its subcellular location is the nucleus. This chain is Transcription factor bHLH129 (BHLH129), found in Arabidopsis thaliana (Mouse-ear cress).